The chain runs to 487 residues: Glutamyl-tRNA(Gln) amidotransferase subunit A (487 aa).

Residues lysine 74 and serine 149 each act as charge relay system in the active site. Serine 173 (acyl-ester intermediate) is an active-site residue.

Belongs to the amidase family. GatA subfamily. As to quaternary structure, heterotrimer of A, B and C subunits.

The enzyme catalyses L-glutamyl-tRNA(Gln) + L-glutamine + ATP + H2O = L-glutaminyl-tRNA(Gln) + L-glutamate + ADP + phosphate + H(+). Functionally, allows the formation of correctly charged Gln-tRNA(Gln) through the transamidation of misacylated Glu-tRNA(Gln) in organisms which lack glutaminyl-tRNA synthetase. The reaction takes place in the presence of glutamine and ATP through an activated gamma-phospho-Glu-tRNA(Gln). This is Glutamyl-tRNA(Gln) amidotransferase subunit A from Synechococcus sp. (strain WH7803).